We begin with the raw amino-acid sequence, 379 residues long: MSQVSLVVMGAGESSRFRQGLSIKKQWLRLGETPLWKHVALHLSKQACFDQVIITASPKEVKYMQKQVDFEVIEGGGTRQESLQNALASVKTPWVLVSDVARFDVPSEVISRVIGRLGEAECVAPAIGVSDTVSYQGEYLSRSEVKLIQTPQLSHVESLLLAFRQGDFTDESSAIAKSGGRVLLVEGSERLKKLTHPHELTLLQGFEPPFGGCYGGSGFDVHAFMEGEGLRLAGVNIPAPVTFKAHSDGDVAIHALIDALLGAAGAGDIGEWFPDSDLAYKGVDSTLLLQEVIKFIRGIGFELINADLTIMAQAPKLSPYKEAMERRLGEVMEVSRQRISVKATTTESLGFVGRKEGVAVSAQVVLKLLDWTKHACFNR.

The 2-C-methyl-D-erythritol 4-phosphate cytidylyltransferase stretch occupies residues 1 to 213; the sequence is MSQVSLVVMG…QGFEPPFGGC (213 aa). The segment at 214–379 is 2-C-methyl-D-erythritol 2,4-cyclodiphosphate synthase; sequence YGGSGFDVHA…DWTKHACFNR (166 aa). 2 residues coordinate a divalent metal cation: Asp220 and His222. Residues 220-222 and 246-247 each bind 4-CDP-2-C-methyl-D-erythritol 2-phosphate; these read DVH and HS. His254 lines the a divalent metal cation pocket. 4-CDP-2-C-methyl-D-erythritol 2-phosphate contacts are provided by residues 268–270, 273–277, 344–347, Phe351, and Arg354; these read DIG, FPDSD, and TTTE.

In the N-terminal section; belongs to the IspD/TarI cytidylyltransferase family. IspD subfamily. This sequence in the C-terminal section; belongs to the IspF family. The cofactor is a divalent metal cation.

The enzyme catalyses 2-C-methyl-D-erythritol 4-phosphate + CTP + H(+) = 4-CDP-2-C-methyl-D-erythritol + diphosphate. It carries out the reaction 4-CDP-2-C-methyl-D-erythritol 2-phosphate = 2-C-methyl-D-erythritol 2,4-cyclic diphosphate + CMP. It functions in the pathway isoprenoid biosynthesis; isopentenyl diphosphate biosynthesis via DXP pathway; isopentenyl diphosphate from 1-deoxy-D-xylulose 5-phosphate: step 2/6. Its pathway is isoprenoid biosynthesis; isopentenyl diphosphate biosynthesis via DXP pathway; isopentenyl diphosphate from 1-deoxy-D-xylulose 5-phosphate: step 4/6. Bifunctional enzyme that catalyzes the formation of 4-diphosphocytidyl-2-C-methyl-D-erythritol from CTP and 2-C-methyl-D-erythritol 4-phosphate (MEP) (IspD), and catalyzes the conversion of 4-diphosphocytidyl-2-C-methyl-D-erythritol 2-phosphate (CDP-ME2P) to 2-C-methyl-D-erythritol 2,4-cyclodiphosphate (ME-CPP) with a corresponding release of cytidine 5-monophosphate (CMP) (IspF). The polypeptide is Bifunctional enzyme IspD/IspF (Wolinella succinogenes (strain ATCC 29543 / DSM 1740 / CCUG 13145 / JCM 31913 / LMG 7466 / NCTC 11488 / FDC 602W) (Vibrio succinogenes)).